The sequence spans 358 residues: Probable D-xylulose reductase A (358 aa).

Residues cysteine 47, histidine 72, and glutamate 73 each coordinate Zn(2+). 182-187 (GAGPVG) lines the NAD(+) pocket.

Belongs to the zinc-containing alcohol dehydrogenase family. It depends on Zn(2+) as a cofactor.

The catalysed reaction is xylitol + NAD(+) = D-xylulose + NADH + H(+). It participates in carbohydrate degradation; L-arabinose degradation via L-arabinitol; D-xylulose 5-phosphate from L-arabinose (fungal route): step 4/5. Functionally, xylitol dehydrogenase which catalyzes the conversion of xylitol to D-xylulose. Xylose is a major component of hemicelluloses such as xylan. Most fungi utilize D-xylose via three enzymatic reactions, xylose reductase (XR), xylitol dehydrogenase (XDH), and xylulokinase, to form xylulose 5-phosphate, which enters pentose phosphate pathway. This chain is Probable D-xylulose reductase A (xdhA), found in Aspergillus clavatus (strain ATCC 1007 / CBS 513.65 / DSM 816 / NCTC 3887 / NRRL 1 / QM 1276 / 107).